Reading from the N-terminus, the 319-residue chain is L-galactose dehydrogenase (319 aa).

Y59 (proton donor) is an active-site residue. In terms of domain architecture, SIS spans 122–269; that stretch reads HCHDIEFGSL…ANKEISSVLV (148 aa). H124 provides a ligand contact to substrate.

This sequence belongs to the aldo/keto reductase family.

The catalysed reaction is L-galactose + NAD(+) = L-galactono-1,4-lactone + NADH + H(+). Catalyzes the oxidation of L-galactose to L-galactono-1,4-lactone in the presence of NAD(+). Uses NAD(+) as a hydrogen acceptor much more efficiently than NADP(+). This is L-galactose dehydrogenase (LGALDH) from Arabidopsis thaliana (Mouse-ear cress).